A 278-amino-acid polypeptide reads, in one-letter code: Adenosylcobinamide-GDP ribazoletransferase (278 aa).

A run of 6 helical transmembrane segments spans residues 44-64 (GIGV…QLLL), 69-89 (FTPL…TGGF), 121-141 (AFGA…LALL), 161-181 (VCAA…VMIW), 204-224 (GGLA…SLAL), and 227-247 (INLI…LRFF).

The protein belongs to the CobS family. The cofactor is Mg(2+).

It localises to the cell inner membrane. The enzyme catalyses alpha-ribazole + adenosylcob(III)inamide-GDP = adenosylcob(III)alamin + GMP + H(+). It catalyses the reaction alpha-ribazole 5'-phosphate + adenosylcob(III)inamide-GDP = adenosylcob(III)alamin 5'-phosphate + GMP + H(+). It functions in the pathway cofactor biosynthesis; adenosylcobalamin biosynthesis; adenosylcobalamin from cob(II)yrinate a,c-diamide: step 7/7. Functionally, joins adenosylcobinamide-GDP and alpha-ribazole to generate adenosylcobalamin (Ado-cobalamin). Also synthesizes adenosylcobalamin 5'-phosphate from adenosylcobinamide-GDP and alpha-ribazole 5'-phosphate. The sequence is that of Adenosylcobinamide-GDP ribazoletransferase from Polaromonas naphthalenivorans (strain CJ2).